Reading from the N-terminus, the 109-residue chain is Class I hydrophobin G (109 aa).

Positions 1-19 are cleaved as a signal peptide; it reads MRLSILSVFSLVGAGMVSA. 4 disulfides stabilise this stretch: Cys36-Cys90, Cys42-Cys84, Cys43-Cys76, and Cys91-Cys105.

This sequence belongs to the fungal hydrophobin family.

It is found in the secreted. The protein resides in the cell wall. In terms of biological role, aerial growth, conidiation, and dispersal of filamentous fungi in the environment rely upon a capability of their secreting small amphipathic proteins called hydrophobins (HPBs) with low sequence identity. Class I can self-assemble into an outermost layer of rodlet bundles on aerial cell surfaces, conferring cellular hydrophobicity that supports fungal growth, development and dispersal; whereas Class II form highly ordered films at water-air interfaces through intermolecular interactions but contribute nothing to the rodlet structure. In P.expansum, hydrophobins contribute to germination, tolerance to cold stress and mycotoxins patulin and citrinin production. The protein is Class I hydrophobin G of Penicillium expansum (Blue mold rot fungus).